Here is a 1071-residue protein sequence, read N- to C-terminus: Nonribosomal peptide synthetase flvI (1071 aa).

The adenylation stretch occupies residues R33–D417. The 77-residue stretch at M552–V628 folds into the Carrier domain. S589 bears the O-(pantetheine 4'-phosphoryl)serine mark. The condensation stretch occupies residues N689–S961.

It belongs to the NRP synthetase family.

It carries out the reaction (2S)-5,5-dimethylpiperidine-2-carboxylate + 10-hydroxy-pre-flavunoidine + ATP = flavunoidine + AMP + diphosphate + H(+). It functions in the pathway secondary metabolite biosynthesis; terpenoid biosynthesis. Nonribosomal peptide synthetase; part of the gene cluster that mediates the biosynthesis of flavunoidine, an alkaloidal terpenoid with a tetracyclic cage-like core connected to dimethylcadaverine via a C-N bond and acylated with 5,5-dimethyl-L-pipecolate. The tetracyclic core is synthesized by the terpene cyclase flvE and the cytochrome P450 monooxygenase flvD. The terpene cyclase flvE catalyzes the cyclization of farnesyl pyrophosphate (FPP) to form (1R,4R,5S)-(+)-acoradiene and the cytochrome P450 monooxygenase flvD is then responsible for oxidative conversion of (1R,4R,5S)-(+)-acoradiene into the tetracyclic cage present in the final product flavunoidine. In parallel, the N-methyltransferase flvH dimethylates L-lysine to give N,N-dimethyl-L-Lysin which is decarboxylated by flvG to afford dimethylcadaverine. The terpene cyclase-like protein flvF is the enzyme that attaches the dimethylcadaverine precusor at the C-7 of the tetracyclic cage to yield pre-flavunoidine. The cytochrome monooxygenase flvC hydroxylates the C-10 position of pre-flavunoidine whereas the NRPS flvI acylates the terpenoid core at the hydroxylated C-10 with dimethylpipecolate to yield final flavunoidine. The bifunctional enzyme flvA and the dehydrogenase flvB are responsible for the synthesis of the dimethylpipecolate precursor. The PLP-dependent lyase domain of flvA might use L-O-acetyl-homoserine and alpha-keto-isovalerate to form an intermediary ketone that can cyclize intramolecularly to yield an imine. The imine can be reduced by flvB to yield the 6-carboxylated pipecolate. The C-terminal alpha-KG-dependent oxygenase domain of flvA is then proposed to catalyze the decarboxylation to yield dimethylpipecolate. The sequence is that of Nonribosomal peptide synthetase flvI from Aspergillus flavus (strain ATCC 200026 / FGSC A1120 / IAM 13836 / NRRL 3357 / JCM 12722 / SRRC 167).